The sequence spans 269 residues: Tryptophan synthase alpha chain (269 aa).

Residues glutamate 49 and aspartate 60 each act as proton acceptor in the active site.

Belongs to the TrpA family. Tetramer of two alpha and two beta chains.

The enzyme catalyses (1S,2R)-1-C-(indol-3-yl)glycerol 3-phosphate + L-serine = D-glyceraldehyde 3-phosphate + L-tryptophan + H2O. The protein operates within amino-acid biosynthesis; L-tryptophan biosynthesis; L-tryptophan from chorismate: step 5/5. In terms of biological role, the alpha subunit is responsible for the aldol cleavage of indoleglycerol phosphate to indole and glyceraldehyde 3-phosphate. The polypeptide is Tryptophan synthase alpha chain (Pseudomonas putida (strain ATCC 700007 / DSM 6899 / JCM 31910 / BCRC 17059 / LMG 24140 / F1)).